The primary structure comprises 450 residues: Na(+)/H(+) antiporter NhaA (450 aa).

A run of 11 helical transmembrane segments spans residues 24 to 44 (FFAI…LALV), 75 to 95 (LILW…GLEI), 111 to 131 (ALPI…YLAL), 140 to 160 (GWGV…SLLG), 169 to 189 (VFLT…IAFF), 196 to 216 (FSFL…NWLG), 224 to 244 (LLVG…ATIA), 318 to 338 (WVAW…TVSA), 352 to 372 (IFFG…WLLV), 390 to 410 (GIGW…TLAF), and 422 to 442 (SILC…RVLL).

This sequence belongs to the NhaA Na(+)/H(+) (TC 2.A.33) antiporter family.

It is found in the cell inner membrane. The enzyme catalyses Na(+)(in) + 2 H(+)(out) = Na(+)(out) + 2 H(+)(in). In terms of biological role, na(+)/H(+) antiporter that extrudes sodium in exchange for external protons. This chain is Na(+)/H(+) antiporter NhaA, found in Oleidesulfovibrio alaskensis (strain ATCC BAA-1058 / DSM 17464 / G20) (Desulfovibrio alaskensis).